Consider the following 174-residue polypeptide: ATP-dependent protease subunit HslV (174 aa).

T2 is a catalytic residue. G157, C160, and T163 together coordinate Na(+).

This sequence belongs to the peptidase T1B family. HslV subfamily. As to quaternary structure, a double ring-shaped homohexamer of HslV is capped on each side by a ring-shaped HslU homohexamer. The assembly of the HslU/HslV complex is dependent on binding of ATP.

The protein resides in the cytoplasm. It catalyses the reaction ATP-dependent cleavage of peptide bonds with broad specificity.. With respect to regulation, allosterically activated by HslU binding. In terms of biological role, protease subunit of a proteasome-like degradation complex believed to be a general protein degrading machinery. This is ATP-dependent protease subunit HslV from Shewanella putrefaciens (strain CN-32 / ATCC BAA-453).